A 139-amino-acid chain; its full sequence is TDP-4-oxo-6-deoxy-alpha-D-glucose-3,4-oxoisomerase (139 aa).

The active-site Proton acceptor is the His-49.

Homodimer.

It catalyses the reaction dTDP-4-dehydro-6-deoxy-alpha-D-glucose = dTDP-3-dehydro-6-deoxy-alpha-D-galactose. In terms of biological role, mediates the isomerization of dTDP-6-deoxy-D-xylohex-4-ulose into dTDP-6-deoxy-D-xylohex-3-ulose in the biosynthesis of dTDP-3-acetamido-3,6-dideoxy-alpha-D-galactose, a glycan chain of the S-layer. This is TDP-4-oxo-6-deoxy-alpha-D-glucose-3,4-oxoisomerase (fdtA) from Aneurinibacillus thermoaerophilus.